The sequence spans 251 residues: Segregation and condensation protein A (251 aa).

Belongs to the ScpA family. In terms of assembly, component of a cohesin-like complex composed of ScpA, ScpB and the Smc homodimer, in which ScpA and ScpB bind to the head domain of Smc. The presence of the three proteins is required for the association of the complex with DNA.

Its subcellular location is the cytoplasm. Participates in chromosomal partition during cell division. May act via the formation of a condensin-like complex containing Smc and ScpB that pull DNA away from mid-cell into both cell halves. This chain is Segregation and condensation protein A, found in Bacillus licheniformis (strain ATCC 14580 / DSM 13 / JCM 2505 / CCUG 7422 / NBRC 12200 / NCIMB 9375 / NCTC 10341 / NRRL NRS-1264 / Gibson 46).